We begin with the raw amino-acid sequence, 565 residues long: DNA-binding protein scr1 (565 aa).

The span at 1–19 shows a compositional bias: polar residues; the sequence is MSEATTATTTGKPSRSTKN. Positions 1–25 are disordered; the sequence is MSEATTATTTGKPSRSTKNPDAPRP. 2 consecutive C2H2-type zinc fingers follow at residues 26–48 and 54–78; these read YKCPLCTKAFYRLEHQTRHIRTH and HVCTFPGCAKRFSRSDELTRHARIH. Disordered regions lie at residues 79–119, 261–303, 390–434, and 466–565; these read TNAN…VHMT, SNAP…STGS, RPVS…DDPS, and ASTP…MTKP. Low complexity predominate over residues 80–102; the sequence is NANSRRNAAAAAAANNSARSSNS. 3 stretches are compositionally biased toward polar residues: residues 108–119, 276–286, and 294–303; these read EPSTNNAGVHMT, LPSSSNTSPNH, and GLTSNSSTGS. Positions 391 to 413 are enriched in low complexity; the sequence is PVSPCSTAPSSPTFSTRSFSPTP. Positions 466 to 478 are enriched in polar residues; it reads ASTPASGAVSRTP. Low complexity-rich tracts occupy residues 479–492, 517–526, and 537–555; these read SSVSLSSLSNVNSS, FSSSSRVSVS, and SSSTKSASSSYSTTTPAFS.

Belongs to the creA/MIG C2H2-type zinc-finger protein family.

Its subcellular location is the nucleus. In terms of biological role, involved in carbon catabolite repression. Represses the transcription of various genes including the inv1 gene. The chain is DNA-binding protein scr1 (scr1) from Schizosaccharomyces pombe (strain 972 / ATCC 24843) (Fission yeast).